The sequence spans 200 residues: Large ribosomal subunit protein uL18 (200 aa).

It belongs to the universal ribosomal protein uL18 family. Part of the 50S ribosomal subunit. Contacts the 5S and 23S rRNAs.

This is one of the proteins that bind and probably mediate the attachment of the 5S RNA into the large ribosomal subunit, where it forms part of the central protuberance. In Thermococcus sibiricus (strain DSM 12597 / MM 739), this protein is Large ribosomal subunit protein uL18.